A 475-amino-acid polypeptide reads, in one-letter code: Aspartyl/glutamyl-tRNA(Asn/Gln) amidotransferase subunit B (475 aa).

It belongs to the GatB/GatE family. GatB subfamily. As to quaternary structure, heterotrimer of A, B and C subunits.

The enzyme catalyses L-glutamyl-tRNA(Gln) + L-glutamine + ATP + H2O = L-glutaminyl-tRNA(Gln) + L-glutamate + ADP + phosphate + H(+). It catalyses the reaction L-aspartyl-tRNA(Asn) + L-glutamine + ATP + H2O = L-asparaginyl-tRNA(Asn) + L-glutamate + ADP + phosphate + 2 H(+). Allows the formation of correctly charged Asn-tRNA(Asn) or Gln-tRNA(Gln) through the transamidation of misacylated Asp-tRNA(Asn) or Glu-tRNA(Gln) in organisms which lack either or both of asparaginyl-tRNA or glutaminyl-tRNA synthetases. The reaction takes place in the presence of glutamine and ATP through an activated phospho-Asp-tRNA(Asn) or phospho-Glu-tRNA(Gln). This is Aspartyl/glutamyl-tRNA(Asn/Gln) amidotransferase subunit B from Thiobacillus denitrificans (strain ATCC 25259 / T1).